The sequence spans 200 residues: Urease accessory protein UreG (200 aa).

8-15 (GPVGSGKT) serves as a coordination point for GTP.

It belongs to the SIMIBI class G3E GTPase family. UreG subfamily. As to quaternary structure, homodimer. UreH, UreF and UreG form a complex that acts as a GTP-hydrolysis-dependent molecular chaperone, activating the urease apoprotein by helping to assemble the nickel containing metallocenter of UreC. The UreE protein probably delivers the nickel.

The protein localises to the cytoplasm. Facilitates the functional incorporation of the urease nickel metallocenter. This process requires GTP hydrolysis, probably effectuated by UreG. In Helicobacter hepaticus (strain ATCC 51449 / 3B1), this protein is Urease accessory protein UreG.